The primary structure comprises 305 residues: NAD kinase 2 (305 aa).

Residue Asp-78 is the Proton acceptor of the active site. NAD(+)-binding positions include Asp-78–Gly-79, Asn-152–Glu-153, Asp-182, Thr-193–Ser-198, and Asn-251.

Belongs to the NAD kinase family. A divalent metal cation is required as a cofactor.

Its subcellular location is the cytoplasm. The catalysed reaction is NAD(+) + ATP = ADP + NADP(+) + H(+). Functionally, involved in the regulation of the intracellular balance of NAD and NADP, and is a key enzyme in the biosynthesis of NADP. Catalyzes specifically the phosphorylation on 2'-hydroxyl of the adenosine moiety of NAD to yield NADP. This Trichormus variabilis (strain ATCC 29413 / PCC 7937) (Anabaena variabilis) protein is NAD kinase 2.